The primary structure comprises 108 residues: UPF0060 membrane protein YE2027 (108 aa).

Helical transmembrane passes span 6–26, 29–49, 59–79, and 85–105; these read LLFFVTALAEIIGCFLPYLWL, GASMWLLLPAAASLALFVWLL, VYAAYGGVYVATALIWLRVVD, and LFDWVGAAVALVGMLIIVAGW.

The protein belongs to the UPF0060 family.

It is found in the cell inner membrane. In Yersinia enterocolitica serotype O:8 / biotype 1B (strain NCTC 13174 / 8081), this protein is UPF0060 membrane protein YE2027.